The following is a 181-amino-acid chain: ADP-ribosylation factor-like protein 1 (181 aa).

The N-myristoyl glycine moiety is linked to residue Gly2. GTP is bound by residues 24 to 31 (GLDGAGKT), 45 to 48 (TIPT), Gly70, 126 to 129 (NKQD), and 160 to 161 (AT). Residues Thr31 and Thr48 each coordinate Mg(2+).

Belongs to the small GTPase superfamily. Arf family. As to quaternary structure, the GTP-bound form interacts with GOLGA1. The GTP-bound form interacts with GOLGA4 and RGPD8. The GTP-bound form directly interacts with ARFIP2. Binds to SCOC, preferentially in its GTP-bound form. May interact with UNC119. Interacts with ARFIP1; this interaction directs ARFIP1 to the trans-Golgi membranes. Interacts with ARFGEF1 (via N-terminus). As to expression, detected in heart, liver, lung and liver (at protein level). Detected in fetal heart, lung, liver and kidney. Detected in adult heart, placenta, lung, liver, skeletal muscle, kidney and pancreas.

The protein localises to the golgi apparatus membrane. The protein resides in the golgi apparatus. It is found in the trans-Golgi network membrane. It localises to the membrane. In terms of biological role, GTP-binding protein that recruits several effectors, such as golgins, arfaptins and Arf-GEFs to the trans-Golgi network, and modulates their functions at the Golgi complex. Plays thereby a role in a wide range of fundamental cellular processes, including cell polarity, innate immunity, or protein secretion mediated by arfaptins, which were shown to play a role in maintaining insulin secretion from pancreatic beta cells. The protein is ADP-ribosylation factor-like protein 1 (ARL1) of Homo sapiens (Human).